A 126-amino-acid chain; its full sequence is Large ribosomal subunit protein bL21 (126 aa).

Residues 105–126 are disordered; it reads KKPSVGPRAKRTKAAPAAEAAE.

In terms of assembly, contacts protein L20. Part of the 50S ribosomal subunit.

This protein binds to 23S rRNA in the presence of protein L20. The chain is Large ribosomal subunit protein bL21 from Rhodopseudomonas palustris (strain ATCC BAA-98 / CGA009).